The chain runs to 300 residues: UDP-N-acetylenolpyruvoylglucosamine reductase (300 aa).

Residues 27–192 (KVGGPADYLA…ISAKFALKPG (166 aa)) enclose the FAD-binding PCMH-type domain. Arg-171 is a catalytic residue. Residue Ser-221 is the Proton donor of the active site. Glu-291 is a catalytic residue.

Belongs to the MurB family. FAD serves as cofactor.

It localises to the cytoplasm. The enzyme catalyses UDP-N-acetyl-alpha-D-muramate + NADP(+) = UDP-N-acetyl-3-O-(1-carboxyvinyl)-alpha-D-glucosamine + NADPH + H(+). It participates in cell wall biogenesis; peptidoglycan biosynthesis. Functionally, cell wall formation. The sequence is that of UDP-N-acetylenolpyruvoylglucosamine reductase from Streptococcus agalactiae serotype Ia (strain ATCC 27591 / A909 / CDC SS700).